A 119-amino-acid chain; its full sequence is Large ribosomal subunit protein bL20 (119 aa).

The protein belongs to the bacterial ribosomal protein bL20 family.

In terms of biological role, binds directly to 23S ribosomal RNA and is necessary for the in vitro assembly process of the 50S ribosomal subunit. It is not involved in the protein synthesizing functions of that subunit. This chain is Large ribosomal subunit protein bL20, found in Xanthomonas oryzae pv. oryzae (strain KACC10331 / KXO85).